Reading from the N-terminus, the 1168-residue chain is Carbamoyl phosphate synthase arginine-specific large chain, mitochondrial (1168 aa).

A mitochondrion-targeting transit peptide spans 1–51; it reads MLSTVHKAGRAPALLRHGRRVPVQASQLRALTSGAQNTSIFQTQANAAQRL. A carboxyphosphate synthetic domain region spans residues 86 to 483; that stretch reads RDHVDVKKVL…SFQKAIRQVD (398 aa). Residues arginine 213, 243–298, arginine 253, glycine 259, glycine 260, lysine 290, leucine 292, glutamate 297, glycine 323, isoleucine 324, histidine 325, glutamine 366, and glutamate 380 each bind ATP; that span reads ANKI…WKEV. The ATP-grasp 1 domain maps to 217–409; that stretch reads AKALEEINIP…LAYTAAKIGL (193 aa). The Mg(2+) site is built by glutamine 366, glutamate 380, and asparagine 382. Glutamine 366, glutamate 380, and asparagine 382 together coordinate Mn(2+). Positions 484 to 628 are oligomerization domain; sequence PRFVGFQGDK…YTTYNASSHD (145 aa). Residues 629–1017 form a carbamoyl phosphate synthetic domain region; it reads VTFEDKGTVI…AYWASLQSAM (389 aa). One can recognise an ATP-grasp 2 domain in the interval 754 to 951; sequence SEILDSIGVD…FIDAATKALV (198 aa). ATP is bound by residues 780 to 837, arginine 790, lysine 829, isoleucine 831, glutamate 836, glycine 861, valine 862, histidine 863, serine 864, glutamine 904, and glutamate 922; that span reads AEEV…AQEI. Mg(2+) is bound by residues glutamine 904, glutamate 922, and asparagine 924. Mn(2+) contacts are provided by glutamine 904, glutamate 922, and asparagine 924. The interval 1018-1152 is allosteric domain; sequence NFRVPEPGEG…AEKLPRPEGI (135 aa). An MGS-like domain is found at 1019 to 1168; it reads FRVPEPGEGL…WSEFIGGKPL (150 aa).

This sequence belongs to the CarB family. In terms of assembly, heterodimer composed of 2 chains; the small (or glutamine) chain promotes the hydrolysis of glutamine to ammonia, which is used by the large (or ammonia) chain to synthesize carbamoyl phosphate. Mg(2+) serves as cofactor. It depends on Mn(2+) as a cofactor.

The protein localises to the mitochondrion matrix. It carries out the reaction hydrogencarbonate + L-glutamine + 2 ATP + H2O = carbamoyl phosphate + L-glutamate + 2 ADP + phosphate + 2 H(+). The enzyme catalyses hydrogencarbonate + NH4(+) + 2 ATP = carbamoyl phosphate + 2 ADP + phosphate + 2 H(+). It functions in the pathway amino-acid biosynthesis; L-arginine biosynthesis; carbamoyl phosphate from bicarbonate: step 1/1. In terms of biological role, large subunit of the arginine-specific carbamoyl phosphate synthase (CPSase). CPSase catalyzes the formation of carbamoyl phosphate from the ammonia moiety of glutamine, hydrogencarbonate, and phosphate donated by ATP, the first step of the arginine biosynthetic pathway. The large subunit (synthetase) binds the substrates ammonia (free or transferred from glutamine from the small subunit), hydrogencarbonate and ATP and carries out an ATP-coupled ligase reaction, activating hydrogencarbonate by forming carboxy phosphate which reacts with ammonia to form carbamoyl phosphate. The polypeptide is Carbamoyl phosphate synthase arginine-specific large chain, mitochondrial (arg-3) (Neurospora crassa (strain ATCC 24698 / 74-OR23-1A / CBS 708.71 / DSM 1257 / FGSC 987)).